The following is a 175-amino-acid chain: NADH-ubiquinone oxidoreductase chain 6 (175 aa).

5 helical membrane-spanning segments follow: residues M1–S21, S25–L45, F47–V67, T88–L108, and Y149–M169.

Belongs to the complex I subunit 6 family. As to quaternary structure, core subunit of respiratory chain NADH dehydrogenase (Complex I) which is composed of 45 different subunits.

The protein localises to the mitochondrion inner membrane. The enzyme catalyses a ubiquinone + NADH + 5 H(+)(in) = a ubiquinol + NAD(+) + 4 H(+)(out). Core subunit of the mitochondrial membrane respiratory chain NADH dehydrogenase (Complex I) which catalyzes electron transfer from NADH through the respiratory chain, using ubiquinone as an electron acceptor. Essential for the catalytic activity and assembly of complex I. The polypeptide is NADH-ubiquinone oxidoreductase chain 6 (MT-ND6) (Sus scrofa (Pig)).